A 132-amino-acid polypeptide reads, in one-letter code: Small ribosomal subunit protein uS8 (132 aa).

Belongs to the universal ribosomal protein uS8 family. Part of the 30S ribosomal subunit. Contacts proteins S5 and S12.

One of the primary rRNA binding proteins, it binds directly to 16S rRNA central domain where it helps coordinate assembly of the platform of the 30S subunit. The sequence is that of Small ribosomal subunit protein uS8 from Bartonella henselae (strain ATCC 49882 / DSM 28221 / CCUG 30454 / Houston 1) (Rochalimaea henselae).